The following is a 343-amino-acid chain: Multidrug resistance protein MdtN (343 aa).

Residues 1–12 (MESTPKKAPRSK) are Cytoplasmic-facing. A helical; Signal-anchor for type II membrane protein membrane pass occupies residues 13-33 (FPALLVVALALVALVFVIWRV). The Periplasmic segment spans residues 34–343 (DSAPSTNDAY…ASAVANLEPQ (310 aa)).

This sequence belongs to the membrane fusion protein (MFP) (TC 8.A.1) family. Could be part of a tripartite efflux system composed of MdtN, MdtO and MdtP.

It is found in the cell inner membrane. Could be involved in resistance to puromycin, acriflavine and tetraphenylarsonium chloride. The polypeptide is Multidrug resistance protein MdtN (mdtN) (Shigella flexneri).